The sequence spans 90 residues: RNA-binding protein Hfq (90 aa).

The Sm domain occupies 11–71 (DVFLNSVRKT…ISTIMPAAPV (61 aa)).

This sequence belongs to the Hfq family. Homohexamer.

Functionally, RNA chaperone that binds small regulatory RNA (sRNAs) and mRNAs to facilitate mRNA translational regulation in response to envelope stress, environmental stress and changes in metabolite concentrations. Also binds with high specificity to tRNAs. In Maricaulis maris (strain MCS10) (Caulobacter maris), this protein is RNA-binding protein Hfq.